The chain runs to 38 residues: Kappa-actitoxin-Bcs3a (38 aa).

Residues 2–37 (CIDRFPTGTCKHVKKGGSCKNSQKYRINCAKTCGLC) form the ShKT domain. Cystine bridges form between Cys-2–Cys-37, Cys-11–Cys-30, and Cys-20–Cys-34. The segment at 25-26 (KY) is crucial for binding to potassium channels.

Belongs to the sea anemone type 1 potassium channel toxin family. Type 1b subfamily.

Its subcellular location is the secreted. The protein localises to the nematocyst. Inhibits voltage-gated potassium channels (IC(50)=405.0 nM for rKCNA1/Kv1.1, IC(50)=0.03 nM for rKCNA2/Kv1.2, IC(50)=1.31 nM for rKCNA6/Kv1.6, IC(50)=74.11 nM for hKCNA3/Kv1.3, and IC(50)=247.69 nM for insect Shaker IR). Binds the Shaker IR channels in a voltage-independent manner. The sequence is that of Kappa-actitoxin-Bcs3a from Bunodosoma caissarum (Sea anemone).